Here is a 127-residue protein sequence, read N- to C-terminus: Large ribosomal subunit protein bL17 (127 aa).

It belongs to the bacterial ribosomal protein bL17 family. Part of the 50S ribosomal subunit. Contacts protein L32.

This Lactobacillus helveticus (strain DPC 4571) protein is Large ribosomal subunit protein bL17.